Here is a 248-residue protein sequence, read N- to C-terminus: MADS-box transcription factor 8 (248 aa).

The MADS-box domain maps to Met-1 to Gln-61. Positions Val-90 to Leu-180 constitute a K-box domain.

As to quaternary structure, may interact with the K-box of MADS6 and MADS16. May interact with MADS13 and MADS18. Binds to FCA. As to expression, expressed in lodicules, stamens and carpels.

The protein localises to the nucleus. Its function is as follows. Probable transcription factor. May be involved in the control of flowering time. The polypeptide is MADS-box transcription factor 8 (MADS8) (Oryza sativa subsp. japonica (Rice)).